The primary structure comprises 119 residues: Holo-[acyl-carrier-protein] synthase (119 aa).

Residues Asp8 and Glu59 each coordinate Mg(2+).

Belongs to the P-Pant transferase superfamily. AcpS family. Mg(2+) serves as cofactor.

Its subcellular location is the cytoplasm. The catalysed reaction is apo-[ACP] + CoA = holo-[ACP] + adenosine 3',5'-bisphosphate + H(+). In terms of biological role, transfers the 4'-phosphopantetheine moiety from coenzyme A to a Ser of acyl-carrier-protein. This chain is Holo-[acyl-carrier-protein] synthase, found in Streptococcus agalactiae serotype Ia (strain ATCC 27591 / A909 / CDC SS700).